A 399-amino-acid chain; its full sequence is Argininosuccinate synthase (399 aa).

9–17 (AYSGGLDTS) contacts ATP. An L-citrulline-binding site is contributed by Y88. Residue G118 coordinates ATP. Residues T120, N124, and D125 each contribute to the L-aspartate site. N124 provides a ligand contact to L-citrulline. L-citrulline is bound by residues R128, S176, E261, and Y273.

The protein belongs to the argininosuccinate synthase family. Type 1 subfamily. In terms of assembly, homotetramer.

It is found in the cytoplasm. It carries out the reaction L-citrulline + L-aspartate + ATP = 2-(N(omega)-L-arginino)succinate + AMP + diphosphate + H(+). It functions in the pathway amino-acid biosynthesis; L-arginine biosynthesis; L-arginine from L-ornithine and carbamoyl phosphate: step 2/3. This is Argininosuccinate synthase from Mycobacterium leprae (strain TN).